An 828-amino-acid polypeptide reads, in one-letter code: Zinc finger protein 438 (828 aa).

3 disordered regions span residues Met-1 to Gln-29, Lys-143 to Pro-173, and Ala-193 to Gln-231. 2 stretches are compositionally biased toward polar residues: residues Asn-16–Gln-29 and Pro-150–Met-159. 3 C2H2-type zinc fingers span residues His-507–His-529, Tyr-535–His-557, and Met-567–His-590. Residues Glu-680 to His-721 form a disordered region. Residues Thr-689–His-721 are compositionally biased toward basic and acidic residues. The segment at Phe-776–His-799 adopts a C2H2-type 4 zinc-finger fold.

This sequence belongs to the krueppel C2H2-type zinc-finger protein family. In terms of tissue distribution, ubiquitous.

It localises to the nucleus. In terms of biological role, isoform 1 acts as a transcriptional repressor. The polypeptide is Zinc finger protein 438 (ZNF438) (Homo sapiens (Human)).